Consider the following 449-residue polypeptide: Dynein regulatory complex protein 10 (449 aa).

Positions 90 to 125 (AVREHEDLCQVLLENVRCLKEKERQLQEQKEAEEEG) form a coiled coil. In terms of domain architecture, IQ spans 400–429 (MVRAATLIQALWKGYLVRSLLRSKKKRGKG). The interval 422–449 (SKKKRGKGKAKDKEKGKQKGKEKGKGKK) is disordered. The span at 430-449 (KAKDKEKGKQKGKEKGKGKK) shows a compositional bias: basic and acidic residues.

The protein belongs to the DRC10 family. In terms of assembly, component of the nexin-dynein regulatory complex (N-DRC). Interacts with CFAP52.

It localises to the cytoplasm. The protein resides in the cytoskeleton. The protein localises to the flagellum axoneme. In terms of biological role, component of the nexin-dynein regulatory complex (N-DRC), a key regulator of ciliary/flagellar motility which maintains the alignment and integrity of the distal axoneme and regulates microtubule sliding in motile axonemes. The protein is Dynein regulatory complex protein 10 (IQCD) of Homo sapiens (Human).